Reading from the N-terminus, the 312-residue chain is Olfactory receptor 4F15 (312 aa).

Topologically, residues 1-25 (MNGMNHSVVSEFVFMGLTNSREIQL) are extracellular. Asparagine 5 carries an N-linked (GlcNAc...) asparagine glycan. Residues 26-49 (LLFVFSLLFYFASMMGNLVIVFTV) form a helical membrane-spanning segment. The Cytoplasmic segment spans residues 50-57 (TMDAHLHS). Residues 58-79 (PMYFLLANLSIIDMAFCSITAP) traverse the membrane as a helical segment. The Extracellular segment spans residues 80–100 (KMICDIFKKHKAISFRGCITQ). Cysteines 97 and 189 form a disulfide. Residues 101-120 (IFFSHALGGTEMVLLIAMAF) form a helical membrane-spanning segment. Residues 121 to 139 (DRYMAICKPLHYLTIMSPR) lie on the Cytoplasmic side of the membrane. A helical membrane pass occupies residues 140 to 158 (MCLYFLATSSIIGLIHSLV). The Extracellular portion of the chain corresponds to 159-195 (QLVFVVDLPFCGPNIFDSFYCDLPRLLRLACTNTQEL). A helical transmembrane segment spans residues 196–219 (EFMVTVNSGLISVGSFVLLVISYI). Over 220-235 (FILFTVWKHSSGGLAK) the chain is Cytoplasmic. The helical transmembrane segment at 236-258 (ALSTLSAHVTVVILFFGPLMFFY) threads the bilayer. At 259 to 269 (TWPSPTSHLDK) the chain is on the extracellular side. The helical transmembrane segment at 270-289 (YLAIFDAFITPFLNPVIYTF) threads the bilayer. Residues 290-312 (RNKDMKVAMRRLCSRLAHFTKIL) lie on the Cytoplasmic side of the membrane.

Belongs to the G-protein coupled receptor 1 family.

The protein localises to the cell membrane. In terms of biological role, odorant receptor. The protein is Olfactory receptor 4F15 (OR4F15) of Homo sapiens (Human).